The following is a 264-amino-acid chain: Phosphatidylglycerol--prolipoprotein diacylglyceryl transferase (264 aa).

7 helical membrane-spanning segments follow: residues 14–34 (VGPL…LLFM), 57–77 (LLLY…VLFF), 89–109 (ILAI…VLVA), 127–147 (FIAP…FING), 176–196 (QLYQ…VYSA), 202–222 (KAVS…AEFF), and 235–255 (LGLS…VGLL). Arg-140 is an a 1,2-diacyl-sn-glycero-3-phospho-(1'-sn-glycerol) binding site.

The protein belongs to the Lgt family.

The protein resides in the cell inner membrane. The enzyme catalyses L-cysteinyl-[prolipoprotein] + a 1,2-diacyl-sn-glycero-3-phospho-(1'-sn-glycerol) = an S-1,2-diacyl-sn-glyceryl-L-cysteinyl-[prolipoprotein] + sn-glycerol 1-phosphate + H(+). It functions in the pathway protein modification; lipoprotein biosynthesis (diacylglyceryl transfer). Its function is as follows. Catalyzes the transfer of the diacylglyceryl group from phosphatidylglycerol to the sulfhydryl group of the N-terminal cysteine of a prolipoprotein, the first step in the formation of mature lipoproteins. This is Phosphatidylglycerol--prolipoprotein diacylglyceryl transferase from Aromatoleum aromaticum (strain DSM 19018 / LMG 30748 / EbN1) (Azoarcus sp. (strain EbN1)).